The chain runs to 135 residues: Small ribosomal subunit protein uS12 (135 aa).

Residue aspartate 89 is modified to 3-methylthioaspartic acid. Residues 106-135 are disordered; the sequence is GVKDRKQGRSKYGAKRPKPGQAPAAAGKKK. Residues 113–123 are compositionally biased toward basic residues; it reads GRSKYGAKRPK. The segment covering 124 to 135 has biased composition (low complexity); sequence PGQAPAAAGKKK.

This sequence belongs to the universal ribosomal protein uS12 family. As to quaternary structure, part of the 30S ribosomal subunit. Contacts proteins S8 and S17. May interact with IF1 in the 30S initiation complex.

With S4 and S5 plays an important role in translational accuracy. In terms of biological role, interacts with and stabilizes bases of the 16S rRNA that are involved in tRNA selection in the A site and with the mRNA backbone. Located at the interface of the 30S and 50S subunits, it traverses the body of the 30S subunit contacting proteins on the other side and probably holding the rRNA structure together. The combined cluster of proteins S8, S12 and S17 appears to hold together the shoulder and platform of the 30S subunit. This chain is Small ribosomal subunit protein uS12, found in Synechococcus sp. (strain JA-3-3Ab) (Cyanobacteria bacterium Yellowstone A-Prime).